Reading from the N-terminus, the 375-residue chain is PTS system fructose-specific EIIC component (375 aa).

The 355-residue stretch at 16 to 370 (VKEDLMTGVS…KPNFDAKMAA (355 aa)) folds into the PTS EIIC type-2 domain. The next 10 helical transmembrane spans lie at 24-44 (VSFM…GYAV), 68-88 (IGVA…AYAI), 93-113 (GLAP…LQAA), 122-142 (GSAG…GIVA), 160-180 (VLLI…FVLG), 203-223 (AILL…GPIN), 238-258 (VTAP…GLAL), 279-299 (VLLG…ADPA), 301-321 (VIPS…ALGV), and 340-360 (FMFI…ATAI).

It is found in the cell membrane. The phosphoenolpyruvate-dependent sugar phosphotransferase system (sugar PTS), a major carbohydrate active transport system, catalyzes the phosphorylation of incoming sugar substrates concomitantly with their translocation across the cell membrane. The enzyme II PtfABC PTS system is involved in fructose transport. The polypeptide is PTS system fructose-specific EIIC component (Haloferax volcanii (strain ATCC 29605 / DSM 3757 / JCM 8879 / NBRC 14742 / NCIMB 2012 / VKM B-1768 / DS2) (Halobacterium volcanii)).